We begin with the raw amino-acid sequence, 716 residues long: Fatty acid oxidation complex subunit alpha (716 aa).

An enoyl-CoA hydratase/isomerase region spans residues 1-189 (MIYQSPTIQV…KVGAVDAVVA (189 aa)). Residue Asp296 coordinates substrate. Positions 311-716 (KDVKSAAVLG…AANNGSYYQA (406 aa)) are 3-hydroxyacyl-CoA dehydrogenase. Residues Met324, Asp343, 400 to 402 (VVE), Lys407, and Ser429 each bind NAD(+). The active-site For 3-hydroxyacyl-CoA dehydrogenase activity is His450. Asn453 is a binding site for NAD(+). Asn500 and Tyr660 together coordinate substrate.

It in the N-terminal section; belongs to the enoyl-CoA hydratase/isomerase family. This sequence in the C-terminal section; belongs to the 3-hydroxyacyl-CoA dehydrogenase family. Heterotetramer of two alpha chains (FadB) and two beta chains (FadA).

The enzyme catalyses a (3S)-3-hydroxyacyl-CoA + NAD(+) = a 3-oxoacyl-CoA + NADH + H(+). It catalyses the reaction a (3S)-3-hydroxyacyl-CoA = a (2E)-enoyl-CoA + H2O. It carries out the reaction a 4-saturated-(3S)-3-hydroxyacyl-CoA = a (3E)-enoyl-CoA + H2O. The catalysed reaction is (3S)-3-hydroxybutanoyl-CoA = (3R)-3-hydroxybutanoyl-CoA. The enzyme catalyses a (3Z)-enoyl-CoA = a 4-saturated (2E)-enoyl-CoA. It catalyses the reaction a (3E)-enoyl-CoA = a 4-saturated (2E)-enoyl-CoA. The protein operates within lipid metabolism; fatty acid beta-oxidation. Its function is as follows. Involved in the aerobic and anaerobic degradation of long-chain fatty acids via beta-oxidation cycle. Catalyzes the formation of 3-oxoacyl-CoA from enoyl-CoA via L-3-hydroxyacyl-CoA. It can also use D-3-hydroxyacyl-CoA and cis-3-enoyl-CoA as substrate. This Shewanella sp. (strain MR-7) protein is Fatty acid oxidation complex subunit alpha.